The primary structure comprises 146 residues: Probable transporter XF_0765 (146 aa).

4 helical membrane passes run 9–29 (FTVA…SEMI), 46–66 (NPSL…GMAL), 91–111 (IVFG…CPGP), and 116–136 (LSTG…GMII).

This sequence belongs to the TsuA/YedE (TC 9.B.102) family.

Its subcellular location is the cell inner membrane. This is Probable transporter XF_0765 from Xylella fastidiosa (strain 9a5c).